The following is a 46-amino-acid chain: Photosystem II reaction center protein K (46 aa).

A propeptide spanning residues 1–9 (MIDALVLVA) is cleaved from the precursor. Residues 10–19 (KLPEAYAIFD) are Lumenal-facing. The chain crosses the membrane as a helical span at residues 20-39 (PLVDVLPVIPVLFLALAFVW). Topologically, residues 40-46 (QAAVGFR) are cytoplasmic.

The protein belongs to the PsbK family. In terms of assembly, PSII is composed of 1 copy each of membrane proteins PsbA, PsbB, PsbC, PsbD, PsbE, PsbF, PsbH, PsbI, PsbJ, PsbK, PsbL, PsbM, PsbT, PsbX, PsbY, PsbZ, Psb30/Ycf12, peripheral proteins PsbO, CyanoQ(PsbQ), PsbU, PsbV and a large number of cofactors. It forms dimeric complexes. Part of a photosystem II (PSII) assembly intermediate complex PSII-I; crystallized from a strain deleted of psbJ, it forms monomeric PSII before addition of the oxygen evolving complex. PSII-I includes 3 assembly factors not found in mature PSII (Psb27, Psb28 and Psb34). PSII binds multiple chlorophylls, carotenoids and specific lipids. is required as a cofactor.

Its subcellular location is the cellular thylakoid membrane. In terms of biological role, one of the components of the core complex of photosystem II (PSII). PSII is a light-driven water:plastoquinone oxidoreductase that uses light energy to abstract electrons from H(2)O, generating O(2) and a proton gradient subsequently used for ATP formation. It consists of a core antenna complex that captures photons, and an electron transfer chain that converts photonic excitation into a charge separation. Required for association of PsbZ and Psb30/Ycf12 with PSII. In Thermosynechococcus vestitus (strain NIES-2133 / IAM M-273 / BP-1), this protein is Photosystem II reaction center protein K.